A 116-amino-acid polypeptide reads, in one-letter code: uncharacterized protein (116 aa).

The 72-residue stretch at 2–73 folds into the N-acetylmuramoyl-L-alanine amidase domain; it reads DGSVGTGRQV…PKALICGHRD (72 aa).

It to phage T3 and T7 N-acetylmuramoyl-L-alanine amidases.

This is an uncharacterized protein from Haemophilus influenzae (strain ATCC 51907 / DSM 11121 / KW20 / Rd).